The sequence spans 141 residues: MAKKVINVVKLQIPAGAATPAPPVGPALGQAGINIVGFTKDFNARTADQKGMIIPVVITVYEDRSFEFITKTPPAPVLLKQAAKIDKASGEPNTKKVGKVTKDQVKEIAETKMKDLNAADIEAAMRMVEGTARSMGIEVED.

The protein belongs to the universal ribosomal protein uL11 family. Part of the ribosomal stalk of the 50S ribosomal subunit. Interacts with L10 and the large rRNA to form the base of the stalk. L10 forms an elongated spine to which L12 dimers bind in a sequential fashion forming a multimeric L10(L12)X complex. Post-translationally, one or more lysine residues are methylated.

Functionally, forms part of the ribosomal stalk which helps the ribosome interact with GTP-bound translation factors. The polypeptide is Large ribosomal subunit protein uL11 (Lactobacillus acidophilus (strain ATCC 700396 / NCK56 / N2 / NCFM)).